Consider the following 309-residue polypeptide: Ribosomal RNA small subunit methyltransferase H (309 aa).

Residues 33–35 (GGH), aspartate 53, phenylalanine 79, aspartate 100, and glutamine 107 contribute to the S-adenosyl-L-methionine site.

The protein belongs to the methyltransferase superfamily. RsmH family.

It localises to the cytoplasm. It carries out the reaction cytidine(1402) in 16S rRNA + S-adenosyl-L-methionine = N(4)-methylcytidine(1402) in 16S rRNA + S-adenosyl-L-homocysteine + H(+). Specifically methylates the N4 position of cytidine in position 1402 (C1402) of 16S rRNA. This chain is Ribosomal RNA small subunit methyltransferase H, found in Clostridium botulinum (strain Langeland / NCTC 10281 / Type F).